The primary structure comprises 103 residues: Large ribosomal subunit protein bL21 (103 aa).

Belongs to the bacterial ribosomal protein bL21 family. As to quaternary structure, part of the 50S ribosomal subunit. Contacts protein L20.

This protein binds to 23S rRNA in the presence of protein L20. The chain is Large ribosomal subunit protein bL21 from Idiomarina loihiensis (strain ATCC BAA-735 / DSM 15497 / L2-TR).